The primary structure comprises 379 residues: 3-dehydroquinate synthase (379 aa).

NAD(+) is bound by residues 67-72 (PGEKNK), 101-105 (GIVLD), 125-126 (TT), lysine 138, and lysine 147. Positions 180, 242, and 258 each coordinate Zn(2+).

Belongs to the sugar phosphate cyclases superfamily. Dehydroquinate synthase family. NAD(+) is required as a cofactor. It depends on Co(2+) as a cofactor. Requires Zn(2+) as cofactor.

Its subcellular location is the cytoplasm. It carries out the reaction 7-phospho-2-dehydro-3-deoxy-D-arabino-heptonate = 3-dehydroquinate + phosphate. It functions in the pathway metabolic intermediate biosynthesis; chorismate biosynthesis; chorismate from D-erythrose 4-phosphate and phosphoenolpyruvate: step 2/7. Functionally, catalyzes the conversion of 3-deoxy-D-arabino-heptulosonate 7-phosphate (DAHP) to dehydroquinate (DHQ). In Chlamydia felis (strain Fe/C-56) (Chlamydophila felis), this protein is 3-dehydroquinate synthase.